The primary structure comprises 61 residues: Probable tautomerase spyM18_1099 (61 aa).

Proline 2 acts as the Proton acceptor; via imino nitrogen in catalysis.

Belongs to the 4-oxalocrotonate tautomerase family.

This Streptococcus pyogenes serotype M18 (strain MGAS8232) protein is Probable tautomerase spyM18_1099.